The chain runs to 648 residues: Threonine--tRNA ligase (648 aa).

In terms of domain architecture, TGS spans 1–61 (MITITFPDGA…EEDGSIEIIT (61 aa)). Residues 242-540 (DHRKLGKELD…LIETYKGAFP (299 aa)) are catalytic. Zn(2+) is bound by residues C336, H387, and H517.

The protein belongs to the class-II aminoacyl-tRNA synthetase family. In terms of assembly, homodimer. The cofactor is Zn(2+).

The protein localises to the cytoplasm. It catalyses the reaction tRNA(Thr) + L-threonine + ATP = L-threonyl-tRNA(Thr) + AMP + diphosphate + H(+). Functionally, catalyzes the attachment of threonine to tRNA(Thr) in a two-step reaction: L-threonine is first activated by ATP to form Thr-AMP and then transferred to the acceptor end of tRNA(Thr). Also edits incorrectly charged L-seryl-tRNA(Thr). This Streptococcus equi subsp. zooepidemicus (strain H70) protein is Threonine--tRNA ligase.